A 123-amino-acid polypeptide reads, in one-letter code: Small ribosomal subunit protein uS12 (123 aa).

The segment at 1-28 (MPTIQQLIRKPRQPKVKRSKSQHLESCP) is disordered. Positions 9-21 (RKPRQPKVKRSKS) are enriched in basic residues. Position 89 is a 3-methylthioaspartic acid (D89).

Belongs to the universal ribosomal protein uS12 family. In terms of assembly, part of the 30S ribosomal subunit. Contacts proteins S8 and S17. May interact with IF1 in the 30S initiation complex.

Its function is as follows. With S4 and S5 plays an important role in translational accuracy. In terms of biological role, interacts with and stabilizes bases of the 16S rRNA that are involved in tRNA selection in the A site and with the mRNA backbone. Located at the interface of the 30S and 50S subunits, it traverses the body of the 30S subunit contacting proteins on the other side and probably holding the rRNA structure together. The combined cluster of proteins S8, S12 and S17 appears to hold together the shoulder and platform of the 30S subunit. The polypeptide is Small ribosomal subunit protein uS12 (Dinoroseobacter shibae (strain DSM 16493 / NCIMB 14021 / DFL 12)).